A 162-amino-acid chain; its full sequence is Caveolin-2 (162 aa).

At 1–86 (MGLETEKADV…FEISKYVMYK (86 aa)) the chain is on the cytoplasmic side. Phosphotyrosine; by SRC is present on tyrosine 19. Serine 20 and serine 23 each carry phosphoserine. The residue at position 27 (tyrosine 27) is a Phosphotyrosine; by SRC. Residue serine 36 is modified to Phosphoserine. An intramembrane region (helical) is located at residues 87 to 107 (FLTVFLAIPLAFIAGILFATL). The Cytoplasmic segment spans residues 108–162 (SCLHIWILMPFVKTCLMVLPSVQTIWKSVTDVIIAPLCTSVGRSFSSVSLQLSQD).

Belongs to the caveolin family. In terms of assembly, monomer or homodimer. Interacts with CAV1; the interaction forms a stable heterooligomeric complex that is required for targeting to lipid rafts and for caveolae formation. Tyrosine phosphorylated forms do not form heterooligomers with the Tyr-19-phosphorylated form existing as a monomer or dimer, and the Tyr-27-form as a monomer only. Interacts (tyrosine phosphorylated form) with the SH2 domain-containing proteins, RASA1, NCK1 and SRC. Interacts (tyrosine phosphorylated form) with INSR, the interaction (Tyr-27-phosphorylated form) is increased on insulin stimulation. Interacts (Tyr-19 phosphorylated form) with MAPK1 (phosphorylated form); the interaction, promoted by insulin, leads to nuclear location and MAPK1 activation. Interacts with STAT3; the interaction is increased on insulin-induced tyrosine phosphorylation leading to STAT activation. In terms of processing, phosphorylated on serine and tyrosine residues. CAV1 promotes phosphorylation on Ser-23 which then targets the complex to the plasma membrane, lipid rafts and caveolae. Phosphorylation on Ser-36 appears to modulate mitosis in endothelial cells. Phosphorylation on both Tyr-19 and Tyr-27 is required for insulin-induced 'Ser-727' phosphorylation of STAT3 and its activation. Phosphorylation on Tyr-19 is required for insulin-induced phosphorylation of MAPK1 and DNA binding of STAT3. Tyrosine phosphorylation is induced by both EGF and insulin (By. similarity).

It is found in the nucleus. The protein resides in the cytoplasm. Its subcellular location is the golgi apparatus membrane. The protein localises to the cell membrane. It localises to the membrane. It is found in the caveola. May act as a scaffolding protein within caveolar membranes. Interacts directly with G-protein alpha subunits and can functionally regulate their activity. Acts as an accessory protein in conjunction with CAV1 in targeting to lipid rafts and driving caveolae formation. The Ser-36 phosphorylated form has a role in modulating mitosis in endothelial cells. Positive regulator of cellular mitogenesis of the MAPK signaling pathway. Required for the insulin-stimulated nuclear translocation and activation of MAPK1 and STAT3, and the subsequent regulation of cell cycle progression. The protein is Caveolin-2 (CAV2) of Pongo abelii (Sumatran orangutan).